We begin with the raw amino-acid sequence, 586 residues long: Ezrin (586 aa).

The 294-residue stretch at 2–295 folds into the FERM domain; it reads PKPINVRVTT…GNHELYMRRR (294 aa). An N6-acetyllysine modification is found at Lys60. The [IL]-x-C-x-x-[DE] motif motif lies at 115 to 120; the sequence is IYCPPE. Phosphotyrosine; by PDGFR is present on Tyr146. The tract at residues 244–586 is interaction with SCYL3; it reads EIRNISFNDK…KQRIDEFEAM (343 aa). A coiled-coil region spans residues 302–462; it reads VQQMKAQARE…QDDLVKTKEE (161 aa). A disordered region spans residues 305-340; it reads MKAQAREEKHQKQLERQQLESEKKRREAVEQEKEQM. Over residues 308-340 the composition is skewed to basic and acidic residues; sequence QAREEKHQKQLERQQLESEKKRREAVEQEKEQM. Tyr354 is modified (phosphotyrosine; by PDGFR). A Phosphoserine modification is found at Ser366. Position 478 is a phosphotyrosine (Tyr478). Ser535 carries the post-translational modification Phosphoserine. Thr567 bears the Phosphothreonine; by ROCK2 and PKC/PRKCI mark.

Interacts with PALS1. Found in a complex with EZR, PODXL and NHERF2. Interacts with MCC, PLEKHG6, PODXL, SCYL3/PACE1, NHERF1, NHERF2 and TMEM8B. Interacts (when phosphorylated) with FES/FPS. Interacts with dimeric S100P, the interaction may be activating through unmasking of F-actin binding sites. Identified in complexes that contain VIM, EZR, AHNAK, BFSP1, BFSP2, ANK2, PLEC, PRX and spectrin. Detected in a complex composed of at least EZR, AHNAK, PPL and PRX. Interacts with PDPN (via cytoplasmic domain); activates RHOA and promotes epithelial-mesenchymal transition. Interacts with SPN/CD43 cytoplasmic tail, CD44 and ICAM2. Interacts with SLC9A3; interaction targets SLC9A3 to the apical membrane. Interacts with SLC9A1; regulates interactions of SLC9A1 with cytoskeletal and promotes stress fiber formation. Interacts with CLIC5; may work together in a complex which also includes RDX and MYO6 to stabilize linkages between the plasma membrane and subjacent actin cytoskeleton at the base of stereocilia. In terms of processing, phosphorylated by tyrosine-protein kinases. Phosphorylation by ROCK2 suppresses the head-to-tail association of the N-terminal and C-terminal halves resulting in an opened conformation which is capable of actin and membrane-binding. Post-translationally, S-nitrosylation is induced by interferon-gamma and oxidatively-modified low-densitity lipoprotein (LDL(ox)) possibly implicating the iNOS-S100A8/9 transnitrosylase complex.

The protein localises to the apical cell membrane. It localises to the cell projection. It is found in the microvillus membrane. The protein resides in the ruffle membrane. Its subcellular location is the cytoplasm. The protein localises to the cell cortex. It localises to the cytoskeleton. It is found in the microvillus. With respect to regulation, a head-to-tail association, of the N-terminal and C-terminal halves results in a closed conformation (inactive form) which is incapable of actin or membrane-binding. Functionally, probably involved in connections of major cytoskeletal structures to the plasma membrane. In epithelial cells, required for the formation of microvilli and membrane ruffles on the apical pole. Along with PLEKHG6, required for normal macropinocytosis. The protein is Ezrin (EZR) of Oryctolagus cuniculus (Rabbit).